Consider the following 85-residue polypeptide: ATP synthase subunit c (85 aa).

2 helical membrane-spanning segments follow: residues 10–30 and 65–85; these read GLALLGKYLGAGLCMGIGAIG and AVAETTGIYSLLIAFMILLVV.

This sequence belongs to the ATPase C chain family. As to quaternary structure, F-type ATPases have 2 components, F(1) - the catalytic core - and F(0) - the membrane proton channel. F(1) has five subunits: alpha(3), beta(3), gamma(1), delta(1), epsilon(1). F(0) has three main subunits: a(1), b(2) and c(10-14). The alpha and beta chains form an alternating ring which encloses part of the gamma chain. F(1) is attached to F(0) by a central stalk formed by the gamma and epsilon chains, while a peripheral stalk is formed by the delta and b chains.

It is found in the cell inner membrane. F(1)F(0) ATP synthase produces ATP from ADP in the presence of a proton or sodium gradient. F-type ATPases consist of two structural domains, F(1) containing the extramembraneous catalytic core and F(0) containing the membrane proton channel, linked together by a central stalk and a peripheral stalk. During catalysis, ATP synthesis in the catalytic domain of F(1) is coupled via a rotary mechanism of the central stalk subunits to proton translocation. Functionally, key component of the F(0) channel; it plays a direct role in translocation across the membrane. A homomeric c-ring of between 10-14 subunits forms the central stalk rotor element with the F(1) delta and epsilon subunits. The chain is ATP synthase subunit c from Thermotoga maritima (strain ATCC 43589 / DSM 3109 / JCM 10099 / NBRC 100826 / MSB8).